Reading from the N-terminus, the 382-residue chain is Na(+)/H(+) antiporter NhaA 2 (382 aa).

Transmembrane regions (helical) follow at residues 11-31, 45-65, 91-111, 116-136, 145-165, 171-191, 197-214, 287-307, 324-344, and 353-373; these read FSVP…LDPA, LSFH…IAAV, LGGV…VGLP, GWGI…RMVF, YLLL…ALFY, PVVA…WGLG, SYWP…IGLH, WLVL…FGLL, LLVA…VSGS, and AAAK…MLLG.

The protein belongs to the NhaA Na(+)/H(+) (TC 2.A.33) antiporter family.

The protein localises to the cell inner membrane. It catalyses the reaction Na(+)(in) + 2 H(+)(out) = Na(+)(out) + 2 H(+)(in). In terms of biological role, na(+)/H(+) antiporter that extrudes sodium in exchange for external protons. This Pelobacter propionicus (strain DSM 2379 / NBRC 103807 / OttBd1) protein is Na(+)/H(+) antiporter NhaA 2.